Consider the following 569-residue polypeptide: 2-succinyl-5-enolpyruvyl-6-hydroxy-3-cyclohexene-1-carboxylate synthase (569 aa).

The protein belongs to the TPP enzyme family. MenD subfamily. In terms of assembly, homodimer. It depends on Mg(2+) as a cofactor. The cofactor is Mn(2+). Requires thiamine diphosphate as cofactor.

The enzyme catalyses isochorismate + 2-oxoglutarate + H(+) = 5-enolpyruvoyl-6-hydroxy-2-succinyl-cyclohex-3-ene-1-carboxylate + CO2. It participates in quinol/quinone metabolism; 1,4-dihydroxy-2-naphthoate biosynthesis; 1,4-dihydroxy-2-naphthoate from chorismate: step 2/7. The protein operates within quinol/quinone metabolism; menaquinone biosynthesis. In terms of biological role, catalyzes the thiamine diphosphate-dependent decarboxylation of 2-oxoglutarate and the subsequent addition of the resulting succinic semialdehyde-thiamine pyrophosphate anion to isochorismate to yield 2-succinyl-5-enolpyruvyl-6-hydroxy-3-cyclohexene-1-carboxylate (SEPHCHC). The sequence is that of 2-succinyl-5-enolpyruvyl-6-hydroxy-3-cyclohexene-1-carboxylate synthase from Haemophilus ducreyi (strain 35000HP / ATCC 700724).